Here is a 273-residue protein sequence, read N- to C-terminus: Serine acetyltransferase (273 aa).

It belongs to the transferase hexapeptide repeat family. As to quaternary structure, part of the cysteine synthase complex formed at a ratio of 1 copy of this protein and 2 copies of O-acetylserine sulfhydrylase (cysK). The complex reversibly dissociates in the presence of O-acetyl-L-serine in the absence of hydrogen sulfide.

It localises to the cytoplasm. The catalysed reaction is L-serine + acetyl-CoA = O-acetyl-L-serine + CoA. It participates in amino-acid biosynthesis; L-cysteine biosynthesis; L-cysteine from L-serine: step 1/2. With respect to regulation, sensitive to feedback inhibition by L-cysteine. This chain is Serine acetyltransferase (cysE), found in Salmonella typhimurium (strain LT2 / SGSC1412 / ATCC 700720).